We begin with the raw amino-acid sequence, 559 residues long: Innexin-10 (559 aa).

A run of 4 helical transmembrane segments spans residues 28-48, 102-122, 182-202, and 283-303; these read YFTC…QFGG, QWVP…SLLW, FLWL…YLCT, and IFIL…GSFF. 2 disordered regions span residues 488–514 and 527–559; these read EEKQ…YQNQ and YRTP…STFK. The segment covering 503 to 514 has biased composition (low complexity); sequence YTNQNPTPYQNQ. The span at 528-559 shows a compositional bias: polar residues; that stretch reads RTPSLSRGTDSRPVSTATDTDQTKKQSMSTFK.

The protein belongs to the pannexin family.

Its subcellular location is the cell membrane. The protein localises to the cell junction. It is found in the gap junction. Functionally, structural component of the gap junctions. The chain is Innexin-10 (inx-10) from Caenorhabditis elegans.